Reading from the N-terminus, the 174-residue chain is Protein SHI RELATED SEQUENCE 3 (174 aa).

Zn(2+) contacts are provided by C9, C12, C20, C25, C29, and C36. The zn(2)-C6 fungal-type; degenerate DNA-binding region spans 9–36 (CEDCGNQAKKDCVYMRCRTCCKSKAFHC). The short motif at 110-113 (IGGH) is the Required for homo- and heterodimerization element.

It belongs to the SHI protein family.

Its subcellular location is the nucleus. In terms of biological role, transcription activator that binds DNA on 5'-ACTCTAC-3' and promotes auxin homeostasis-regulating gene expression (e.g. YUC genes), as well as genes affecting stamen development, cell expansion and timing of flowering. Synergistically with other SHI-related proteins, regulates gynoecium, stamen and leaf development in a dose-dependent manner, controlling apical-basal patterning. Promotes style and stigma formation, and influences vascular development during gynoecium development. May also have a role in the formation and/or maintenance of the shoot apical meristem (SAM). This is Protein SHI RELATED SEQUENCE 3 (SRS3) from Arabidopsis thaliana (Mouse-ear cress).